Reading from the N-terminus, the 162-residue chain is Transcriptional repressor NrdR (162 aa).

The disordered stretch occupies residues 1–21 (MNCPDCGDEQTRVIDTETSAD). A zinc finger spans residues 3–34 (CPDCGDEQTRVIDTETSADGTSVRRRRECQRC). The ATP-cone domain maps to 49 to 139 (LQVKKRNGTI…VYKAFSEPQE (91 aa)).

It belongs to the NrdR family. Requires Zn(2+) as cofactor.

In terms of biological role, negatively regulates transcription of bacterial ribonucleotide reductase nrd genes and operons by binding to NrdR-boxes. The protein is Transcriptional repressor NrdR of Halorubrum lacusprofundi (strain ATCC 49239 / DSM 5036 / JCM 8891 / ACAM 34).